Reading from the N-terminus, the 247-residue chain is 14-3-3 protein gamma (247 aa).

This sequence belongs to the 14-3-3 family. As to quaternary structure, homodimer, and heterodimer with other family members.

Its subcellular location is the cytoplasm. Its function is as follows. Adapter protein implicated in the regulation of a large spectrum of both general and specialized signaling pathways. Binds to a large number of partners, usually by recognition of a phosphoserine or phosphothreonine motif. Binding generally results in the modulation of the activity of the binding partner. This chain is 14-3-3 protein gamma (YWHAG), found in Gallus gallus (Chicken).